The following is a 493-amino-acid chain: GPI alpha-1,6-mannosyltransferase 2 (493 aa).

At 1–13 (MGLLDPSQKEVLR) the chain is on the cytoplasmic side. Residues 14 to 34 (FAVNCRILTLVLQALFNLIIP) traverse the membrane as a helical segment. Residues 35–77 (DHHADAFCPPRLAPSGSADQLVEGLLGGLSRWDAEHFLFIAEH) lie on the Lumenal side of the membrane. Residues 78 to 98 (GYLYEHNFAFFPGFPLALLMG) traverse the membrane as a helical segment. Over 99-113 (TELLRPLQGLLSQRS) the chain is Cytoplasmic. Residues 114-134 (CLLVSVALLNLLFSVLAAVAL) form a helical membrane-spanning segment. Residues 135-136 (HD) lie on the Lumenal side of the membrane. A helical membrane pass occupies residues 137–157 (LGCLVLHCPRQALCAALLFCI). Topologically, residues 158-161 (SPAN) are cytoplasmic. The chain crosses the membrane as a helical span at residues 162-182 (VFLAAGYSEALFAFLTFSAMG). Over 183–192 (QLERGRGWAS) the chain is Lumenal. A helical membrane pass occupies residues 193 to 213 (GLLFALAAGVRSNGLVSLGFL). Topologically, residues 214 to 234 (LHSQCRGFCSSLAVLSPWKPL) are cytoplasmic. A helical transmembrane segment spans residues 235–255 (VKLMASVCLSVLIVSLPFALF). Residues 256 to 327 (QYRAYIQFCS…RYYELKQVPN (72 aa)) are Lumenal-facing. A helical membrane pass occupies residues 328 to 348 (FLLATPVTVLVVWATWTYVTT). At 349–378 (HPWLCLTLGLQRTKDRENPEKPHRGFLSPK) the chain is on the cytoplasmic side. Residues 379 to 399 (VFVYLVHAAALLVFGGLCMHV) traverse the membrane as a helical segment. Over 400–469 (QVLTRFLASS…DWKRCSPVTR (70 aa)) the chain is Lumenal. A helical transmembrane segment spans residues 470–490 (CVLVYFLTYWLLGLILHCNFL). The Cytoplasmic portion of the chain corresponds to 491 to 493 (PWT).

Belongs to the PIGV family. Not N-glycosylated.

Its subcellular location is the endoplasmic reticulum membrane. The protein operates within glycolipid biosynthesis; glycosylphosphatidylinositol-anchor biosynthesis. In terms of biological role, alpha-1,6-mannosyltransferase that catalyzes the transfer of the second mannose, via an alpha-1,6 bond, from a dolichol-phosphate-mannose (Dol-P-Man) to the alpha-D-Man-(1-&gt;4)-alpha-D-GlcN-(1-&gt;6)-(1-radyl,2-acyl-sn-glycero-3-phospho)-2-acyl-inositol (also termed H2) intermediate to generate an alpha-D-Man-(1-&gt;6)-alpha-D-Man-(1-&gt;4)-alpha-D-GlcN-(1-&gt;6)-(1-radyl,2-acyl-sn-glycero-3-phospho)-2-acyl-inositol (also termed H3) and participates in the seventh step of the glycosylphosphatidylinositol-anchor biosynthesis. Also transfers the second mannose on a 2-PEtn-alpha-D-Man-(1-&gt;4)-alpha-D-GlcN-(1-&gt;6)-(1-radyl,2-acyl-sn-glycero-3-phospho)-2-acyl-inositol (also termed H5). This chain is GPI alpha-1,6-mannosyltransferase 2, found in Mus musculus (Mouse).